The primary structure comprises 427 residues: Trigger factor (427 aa).

The 86-residue stretch at 163–248 (GDTVVIDFVG…VNEVKAKELP (86 aa)) folds into the PPIase FKBP-type domain.

This sequence belongs to the FKBP-type PPIase family. Tig subfamily.

It localises to the cytoplasm. It catalyses the reaction [protein]-peptidylproline (omega=180) = [protein]-peptidylproline (omega=0). Its function is as follows. Involved in protein export. Acts as a chaperone by maintaining the newly synthesized protein in an open conformation. Functions as a peptidyl-prolyl cis-trans isomerase. The chain is Trigger factor from Lactococcus lactis subsp. cremoris (strain SK11).